A 143-amino-acid chain; its full sequence is Antiholin-like protein LrgA (143 aa).

The next 4 membrane-spanning stretches (helical) occupy residues 6–26, 30–50, 61–81, and 97–117; these read VYSF…SNII, LPIP…LLCL, LGTA…ISVI, and VIVV…QFIL.

Belongs to the CidA/LrgA family. LrgA subfamily.

It is found in the cell membrane. Its function is as follows. Inhibits the expression or activity of extracellular murein hydrolases by interacting, possibly with LrgB, with the holin-like protein CidA. The LrgAB and CidA proteins may affect the proton motive force of the membrane. May be involved in programmed cell death (PCD), possibly triggering PCD in response to antibiotics and environmental stresses. This Bacillus cereus (strain AH820) protein is Antiholin-like protein LrgA.